A 322-amino-acid chain; its full sequence is Putative MgpC-like protein MPN_367 (322 aa).

Positions 1 to 48 are enriched in low complexity; it reads MVGSGAAGSASSLQGNGSNSSGLKSLLRSAPVSVPPSSTSNQTLSLSN. 2 disordered regions span residues 1-59 and 118-145; these read MVGS…AVVS and DATSTNLPHAAGASQTGLGTGSPREPAL. Positions 120–134 are enriched in polar residues; the sequence is TSTNLPHAAGASQTG.

The protein belongs to the MgpC family.

This is Putative MgpC-like protein MPN_367 from Mycoplasma pneumoniae (strain ATCC 29342 / M129 / Subtype 1) (Mycoplasmoides pneumoniae).